Reading from the N-terminus, the 380-residue chain is Cytochrome b (380 aa).

The next 4 helical transmembrane spans lie at 33–53 (SGSL…FLAM), 77–98 (WLIR…YLHV), 113–133 (WNIG…GYVL), and 178–198 (FFAF…IHLL). Heme b-binding residues include histidine 83 and histidine 97. Heme b is bound by residues histidine 182 and histidine 196. Histidine 201 provides a ligand contact to a ubiquinone. A run of 4 helical transmembrane segments spans residues 226 to 246 (YKDL…ALFS), 288 to 308 (LGGV…PILH), 320 to 340 (LSQI…WIGG), and 347 to 367 (FVLI…IALP).

It belongs to the cytochrome b family. The cytochrome bc1 complex contains 3 respiratory subunits (MT-CYB, CYC1 and UQCRFS1), 2 core proteins (UQCRC1 and UQCRC2) and probably 6 low-molecular weight proteins. Heme b serves as cofactor.

The protein localises to the mitochondrion inner membrane. Its function is as follows. Component of the ubiquinol-cytochrome c reductase complex (complex III or cytochrome b-c1 complex) that is part of the mitochondrial respiratory chain. The b-c1 complex mediates electron transfer from ubiquinol to cytochrome c. Contributes to the generation of a proton gradient across the mitochondrial membrane that is then used for ATP synthesis. This Polyodon spathula (North American paddlefish) protein is Cytochrome b (mt-cyb).